The chain runs to 276 residues: CDP-diacylglycerol--serine O-phosphatidyltransferase (276 aa).

Positions 1–21 (MVESDEDFAPQEFPHTDTDVI) are disordered. Residues Ser4, Ser34, Ser42, Ser46, Ser47, and Ser50 each carry the phosphoserine modification. Helical transmembrane passes span 82–102 (MADY…VSCL), 163–183 (IAFA…FFVL), 210–230 (YFEG…AYCV), and 248–268 (QILE…GMIS).

The protein belongs to the CDP-alcohol phosphatidyltransferase class-I family. It depends on Mn(2+) as a cofactor. Requires Mg(2+) as cofactor.

It is found in the microsome membrane. It localises to the endoplasmic reticulum membrane. The protein localises to the mitochondrion outer membrane. The enzyme catalyses a CDP-1,2-diacyl-sn-glycerol + L-serine = a 1,2-diacyl-sn-glycero-3-phospho-L-serine + CMP + H(+). Its pathway is phospholipid metabolism; phosphatidylethanolamine biosynthesis; phosphatidylethanolamine from CDP-diacylglycerol: step 1/2. Catalyzes the synthesis of phosphatidylserine (PtdSer). This chain is CDP-diacylglycerol--serine O-phosphatidyltransferase (CHO1), found in Saccharomyces cerevisiae (strain ATCC 204508 / S288c) (Baker's yeast).